Consider the following 653-residue polypeptide: Multidomain regulatory protein MT1410 (653 aa).

A PAC domain is found at 86-142; sequence SGSEWRLQTDYDGSGVEERYFDFVVTPRRRADGSIEGVQLIVDDVTSRVRARQAAEA. The region spanning 177–396 is the PPM-type phosphatase domain; it reads DIAAEYLVAA…DDVTLLAMQR (220 aa). Mn(2+) is bound by residues aspartate 211, valine 212, aspartate 328, and aspartate 387. Residues 397 to 544 form an anti-sigma factor kinase region region; the sequence is RAPTPPLHIT…TMVRRAAFQQ (148 aa). Positions 546 to 653 constitute an STAS domain; sequence IDSEFVSLVE…ADTEDIFAQE (108 aa). Serine 600 is modified (phosphoserine).

It depends on Mg(2+) as a cofactor. Requires Mn(2+) as cofactor. Post-translationally, autophosphorylated.

The catalysed reaction is O-phospho-L-seryl-[protein] + H2O = L-seryl-[protein] + phosphate. The enzyme catalyses O-phospho-L-threonyl-[protein] + H2O = L-threonyl-[protein] + phosphate. It catalyses the reaction L-seryl-[protein] + ATP = O-phospho-L-seryl-[protein] + ADP + H(+). It carries out the reaction L-threonyl-[protein] + ATP = O-phospho-L-threonyl-[protein] + ADP + H(+). Primarily acts as an independent SigF regulator that is sensitive to the osmosensory signal, mediating the cross talk of PknD with the SigF regulon. Possesses both phosphatase and kinase activities. The kinase domain functions as a classic anti-sigma factor-like kinase to phosphorylate the anti-anti-sigma factor domain at the canonical regulatory site, and the phosphatase domain antagonizes this activity. In Mycobacterium tuberculosis (strain CDC 1551 / Oshkosh), this protein is Multidomain regulatory protein MT1410.